The primary structure comprises 382 residues: Homoserine O-acetyltransferase (382 aa).

Positions 1–20 (MSTDQSPCPSATGAELLPPP) are disordered. An AB hydrolase-1 domain is found at 59–363 (NVVLVEHALT…RDGHDGFLTE (305 aa)). Serine 164 serves as the catalytic Nucleophile. Arginine 234 is a substrate binding site. Catalysis depends on residues aspartate 327 and histidine 357. Aspartate 358 is a substrate binding site.

Belongs to the AB hydrolase superfamily. MetX family. In terms of assembly, homodimer.

Its subcellular location is the cytoplasm. The catalysed reaction is L-homoserine + acetyl-CoA = O-acetyl-L-homoserine + CoA. Its pathway is amino-acid biosynthesis; L-methionine biosynthesis via de novo pathway; O-acetyl-L-homoserine from L-homoserine: step 1/1. In terms of biological role, transfers an acetyl group from acetyl-CoA to L-homoserine, forming acetyl-L-homoserine. This chain is Homoserine O-acetyltransferase, found in Nocardia farcinica (strain IFM 10152).